The primary structure comprises 876 residues: Xylosyltransferase oxt (876 aa).

Residues Met-1–Arg-14 are Cytoplasmic-facing. Residues Ala-15–Leu-35 traverse the membrane as a helical; Signal-anchor for type II membrane protein segment. The Lumenal segment spans residues Asp-36–Lys-876. The disordered stretch occupies residues Ala-48–Pro-67. 4 disulfides stabilise this stretch: Cys-83–Cys-111, Cys-127–Cys-465, Cys-484–Cys-497, and Cys-486–Cys-495. Asn-131 and Asn-135 each carry an N-linked (GlcNAc...) asparagine glycan. The 95-residue stretch at Ala-134–Gly-228 folds into the WSC domain. UDP-alpha-D-xylose-binding positions include Asp-283 and Thr-312–Trp-314. Residue Asn-342 is glycosylated (N-linked (GlcNAc...) asparagine). Position 415 to 416 (Asp-415 to Trp-416) interacts with UDP-alpha-D-xylose. UDP-alpha-D-xylose is bound by residues Ser-498 and Arg-522–Lys-523. N-linked (GlcNAc...) asparagine glycosylation is found at Asn-696 and Asn-725. Cys-842 and Cys-855 are oxidised to a cystine.

Belongs to the glycosyltransferase 14 family. XylT subfamily. Ca(2+) serves as cofactor. Requires Mn(2+) as cofactor. The cofactor is Mg(2+).

Its subcellular location is the endoplasmic reticulum membrane. It is found in the golgi apparatus membrane. It carries out the reaction UDP-alpha-D-xylose + L-seryl-[protein] = 3-O-(beta-D-xylosyl)-L-seryl-[protein] + UDP + H(+). Its pathway is glycan metabolism; chondroitin sulfate biosynthesis. It participates in glycan metabolism; heparan sulfate biosynthesis. In terms of biological role, catalyzes the first step in biosynthesis of glycosaminoglycan. Transfers D-xylose from UDP-D-xylose to specific serine residues of the core protein. This chain is Xylosyltransferase oxt, found in Drosophila melanogaster (Fruit fly).